We begin with the raw amino-acid sequence, 60 residues long: Homeobox protein CHOX-CAD2 (60 aa).

A DNA-binding region (homeobox) is located at residues Lys-1–Ile-60.

The protein belongs to the Caudal homeobox family.

The protein localises to the nucleus. This is Homeobox protein CHOX-CAD2 (CHOX-CAD2) from Gallus gallus (Chicken).